A 201-amino-acid polypeptide reads, in one-letter code: uncharacterized protein (201 aa).

The N-terminal stretch at 1–23 (MKILYFIFVIIINILLILNHVKS) is a signal peptide. The Extracellular segment spans residues 24-178 (KYNTFIFENT…GNYGEDPQRN (155 aa)). Residues N114 and N134 are each glycosylated (N-linked (GlcNAc...) asparagine). A disordered region spans residues 122–157 (TPETPSPTENAPNTSGGSSEGNHYTYKSSSSSSEHI). Positions 123-148 (PETPSPTENAPNTSGGSSEGNHYTYK) are enriched in polar residues. The helical transmembrane segment at 179 to 199 (IGISLSSSLIFISILFLIIFI) threads the bilayer. Topologically, residues 200 to 201 (NN) are cytoplasmic.

It localises to the membrane. This is an uncharacterized protein from Dictyostelium discoideum (Social amoeba).